The sequence spans 668 residues: Packaging protein UL32 homolog (668 aa).

Residues 1–10 (MNPSTHVSSN) show a composition bias toward polar residues. Residues 1-35 (MNPSTHVSSNGPTTPPHGPHTTFLPPTSPAPSTSS) are disordered. Residues 19–35 (PHTTFLPPTSPAPSTSS) are compositionally biased toward low complexity. Zn(2+) contacts are provided by Cys200, Cys203, His276, and Cys282. The interval 200 to 282 (CNLCAIISIC…FHLHFFINRC (83 aa)) is zinc finger 1. Basic and acidic residues-rich tracts occupy residues 392 to 401 (SEREDARMMM) and 410 to 419 (GEKGGDDPGR). The segment at 392-430 (SEREDARMMMEEEEDEEGGEKGGDDPGRHNGGGTSGGFS) is disordered. The Zn(2+) site is built by Cys459, Cys462, His567, and Cys574. A zinc finger 2 region spans residues 459 to 574 (CLLCELMACS…YKHFFCDPQC (116 aa)).

This sequence belongs to the herpesviridae UL32 protein family.

The protein localises to the host cytoplasm. Its subcellular location is the host nucleus. Its function is as follows. Plays a role in efficient localization of neo-synthesized capsids to nuclear replication compartments, thereby controlling cleavage and packaging of virus genomic DNA. The protein is Packaging protein UL32 homolog (UL52) of Homo sapiens (Human).